The chain runs to 275 residues: Uroporphyrinogen-III synthase (275 aa).

It belongs to the uroporphyrinogen-III synthase family.

It carries out the reaction hydroxymethylbilane = uroporphyrinogen III + H2O. It functions in the pathway porphyrin-containing compound metabolism; protoporphyrin-IX biosynthesis; coproporphyrinogen-III from 5-aminolevulinate: step 3/4. Functionally, catalyzes cyclization of the linear tetrapyrrole, hydroxymethylbilane, to the macrocyclic uroporphyrinogen III, the fourth step in the heme biosynthetic pathway. The polypeptide is Uroporphyrinogen-III synthase (Saccharomyces cerevisiae (strain ATCC 204508 / S288c) (Baker's yeast)).